Consider the following 364-residue polypeptide: MTVLKVKFTKTKRDKLAQILWILNWVSVVSGIILFSLGLFLKIEIKKRNEVMAKGDINSVPNMLISVGVIACVVNFLGGKICYDCSDANKFSRWKLIMLPYIICTFCFTFCILLGALMCYTMRNELEESLYLGLRDAIKFYKDTDIPGRCFLKKTVDMLQIGFQCCGNNGFRDWFEVQWVSARYLNMASKEVMDRFKSNVDGKFLVDGVPFSCCNPSSPRPCIQYHLTNNSAHYNYDFLTEELNIWVKGCREALLEYYTAIMRSIGIAALLIWLFELSVLIGVRYLQTAMKNVLLQGDLQGESDGWLLENSFVETAKYNINIIKNLGKANQISTVSGMNDPNINVQNTNCGKSNVTAKSIPAAS.

Over 1–24 the chain is Cytoplasmic; it reads MTVLKVKFTKTKRDKLAQILWILN. The helical transmembrane segment at 25–43 threads the bilayer; that stretch reads WVSVVSGIILFSLGLFLKI. The Lumenal portion of the chain corresponds to 44-61; that stretch reads EIKKRNEVMAKGDINSVP. A helical transmembrane segment spans residues 62–80; the sequence is NMLISVGVIACVVNFLGGK. The Cytoplasmic portion of the chain corresponds to 81–99; that stretch reads ICYDCSDANKFSRWKLIML. A helical transmembrane segment spans residues 100-123; it reads PYIICTFCFTFCILLGALMCYTMR. Residues 124-264 lie on the Lumenal side of the membrane; the sequence is NELEESLYLG…LEYYTAIMRS (141 aa). An N-linked (GlcNAc...) asparagine glycan is attached at N229. A helical transmembrane segment spans residues 265–290; it reads IGIAALLIWLFELSVLIGVRYLQTAM. The Cytoplasmic segment spans residues 291–364; it reads KNVLLQGDLQ…VTAKSIPAAS (74 aa).

The protein belongs to the PRPH2/ROM1 family.

It is found in the membrane. The protein is Photoreceptor outer segment membrane glycoprotein 2 of Gallus gallus (Chicken).